Here is a 130-residue protein sequence, read N- to C-terminus: Sec-independent protein translocase protein TatB (130 aa).

A helical membrane pass occupies residues Met1–Gly21. 2 stretches are compositionally biased toward basic and acidic residues: residues Gln57–Met67 and Pro111–Asp130. Residues Gln57–Asp130 are disordered.

This sequence belongs to the TatB family. As to quaternary structure, the Tat system comprises two distinct complexes: a TatABC complex, containing multiple copies of TatA, TatB and TatC subunits, and a separate TatA complex, containing only TatA subunits. Substrates initially bind to the TatABC complex, which probably triggers association of the separate TatA complex to form the active translocon.

Its subcellular location is the cell inner membrane. In terms of biological role, part of the twin-arginine translocation (Tat) system that transports large folded proteins containing a characteristic twin-arginine motif in their signal peptide across membranes. Together with TatC, TatB is part of a receptor directly interacting with Tat signal peptides. TatB may form an oligomeric binding site that transiently accommodates folded Tat precursor proteins before their translocation. The chain is Sec-independent protein translocase protein TatB from Alcanivorax borkumensis (strain ATCC 700651 / DSM 11573 / NCIMB 13689 / SK2).